A 793-amino-acid chain; its full sequence is Translocase of chloroplast 90, chloroplastic (793 aa).

The interval 22 to 59 (LGSDPFFRDPHQEQDNHSQAPAAPQPVTLSEPPCSTSS) is disordered. Over residues 27–37 (FFRDPHQEQDN) the composition is skewed to basic and acidic residues. A coiled-coil region spans residues 130 to 157 (LIRAEESELKNVKLRQDRAKALAREQES). The region spanning 164-394 (DFSLRILVLG…FRDSIGLGQP (231 aa)) is the AIG1-type G domain. Residues 173–180 (GKTGVGKS) are G1. Residues 176–181 (GVGKSA) and 195–200 (DAFRPG) contribute to the GTP site. Ser180 provides a ligand contact to Mg(2+). The homodimerization stretch occupies residues 195–198 (DAFR). The tract at residues 199–203 (PGTDR) is G2. Positions 220 to 223 (DTPG) are G3. The segment at 259–264 (RLDMID) is homodimerization. The helical transmembrane segment at 279-297 (IFGAAIWLNTILVMTHSAA) threads the bilayer. Positions 293–296 (THSA) are G4. GTP is bound by residues His294 and 341–342 (EN). Positions 341-343 (ENH) are G5. Coiled coils occupy residues 410 to 442 (LRRR…YDQL) and 477 to 503 (KKQL…DTEQ).

This sequence belongs to the TRAFAC class TrmE-Era-EngA-EngB-Septin-like GTPase superfamily. AIG1/Toc34/Toc159-like paraseptin GTPase family. TOC159 subfamily. Homodimer. Part of the TOC core complex that includes 1 protein for the specific recognition of transit peptides surrounded by a ring composed of four proteins forming translocation channels, and four to five GTP-binding proteins providing energy. This core complex can interact with components of the TIC complex to form a larger import complex. Chloroplastic protein precursor such as prSS (precursor of the RuBisCO small subunit) interacts with these complexes. The TOC complex contains a specific subset of polar lipids such as digalactosyldiacylglyceride (DGDG), phosphatidylcholine (PC) and phosphatidylglycerol (PG). Interacts with TOC33 and TOC75. The cofactor is Mg(2+). Expressed in seedlings, leaves, flowers, and roots.

The protein localises to the plastid. Its subcellular location is the chloroplast outer membrane. It is found in the cytoplasm. In terms of biological role, GTPase involved in protein precursor import into chloroplasts. Seems to recognize chloroplast-destined precursor proteins and regulate their presentation to the translocation channel through GTP hydrolysis. Probably specialized in the import of nuclear encoded photosynthetic preproteins from the cytoplasm to the chloroplast. This is Translocase of chloroplast 90, chloroplastic (TOC90) from Arabidopsis thaliana (Mouse-ear cress).